The primary structure comprises 420 residues: MANVISISHFTLLALPYLLLLLSSTAAAINVTAVLSSFPNLSSFSNLLVSSGIAAELSGRNSLTLLAVPNSQFSSASLDLTRRLPPSALADLLRFHVLLQFLSDSDLRRIPPSGSAVTTLYEASGRTFFGSGSVNVTRDPASGSVTIGSPATKNVTVLKLLETKPPNITVLTVDSLIVPTGIDITASETLTPPPTSTSLSPPPAGINLTQILINGHNFNVALSLLVASGVITEFENDERGAGITVFVPTDSAFSDLPSNVNLQSLPAEQKAFVLKFHVLHSYYTLGSLESITNPVQPTLATEEMGAGSYTLNISRVNGSIVTINSGVVLAVVTQTAFDQNPVSVFGVSKVLLPKELFPKSGQPVATAPPQEISLSPESSSEQPSRLVSPPREIVSSGAVKRPLGFLVLWCWCIAFCYVLV.

An N-terminal signal peptide occupies residues 1 to 28; that stretch reads MANVISISHFTLLALPYLLLLLSSTAAA. 2 consecutive FAS1 domains span residues 29-177 and 205-351; these read INVT…DSLI and GINL…SKVL. 8 N-linked (GlcNAc...) asparagine glycosylation sites follow: asparagine 30, asparagine 40, asparagine 135, asparagine 154, asparagine 167, asparagine 207, asparagine 312, and asparagine 317. Residues 360–388 are disordered; it reads SGQPVATAPPQEISLSPESSSEQPSRLVS. The span at 368–384 shows a compositional bias: low complexity; that stretch reads PPQEISLSPESSSEQPS. Serine 396 is lipidated: GPI-anchor amidated serine. The propeptide at 397–420 is removed in mature form; that stretch reads GAVKRPLGFLVLWCWCIAFCYVLV.

Belongs to the fasciclin-like AGP family. As to expression, expressed in all plant organs and tissues, including guard cells in the leaf.

The protein resides in the cell membrane. Its function is as follows. May be a cell surface adhesion protein that is required for normal cell expansion. This Arabidopsis thaliana (Mouse-ear cress) protein is Fasciclin-like arabinogalactan protein 4 (FLA4).